A 558-amino-acid chain; its full sequence is Solute carrier family 22 member 6-A (558 aa).

Residues 1–15 (MSFAELLERTGGMGR) are Cytoplasmic-facing. Residues 16 to 36 (FQITQVALMCFPILLMASHNL) traverse the membrane as a helical segment. The Extracellular segment spans residues 37–140 (LQNFSAAIPD…LVCGHKNRRQ (104 aa)). The chain crosses the membrane as a helical span at residues 141–161 (LAQSVYMGGVLVGAIILGGLS). Over 162-167 (DRYGRR) the chain is Cytoplasmic. A helical membrane pass occupies residues 168–188 (ALLIWSYFQMAVSGLCSAFSP). Residues 189–197 (NYLSYCIFR) lie on the Extracellular side of the membrane. The helical transmembrane segment at 198-218 (FLTGMALSGIGLNTTALIVEW) threads the bilayer. Topologically, residues 219–225 (VPTRVRT) are cytoplasmic. The helical transmembrane segment at 226–246 (ITGTLAGFSYTVGQLLLAGLA) threads the bilayer. Residues 247–253 (YAMRDWR) lie on the Extracellular side of the membrane. Residues 254-274 (WLQLCVSLPFFIFFLYSWWFP) traverse the membrane as a helical segment. The Cytoplasmic portion of the chain corresponds to 275–342 (ESARWLVLSG…DLIRTSTIRR (68 aa)). The helical transmembrane segment at 343–363 (ISCALSLVWFSTSFAYYGLAM) threads the bilayer. The Extracellular portion of the chain corresponds to 364–369 (DLQNFN). A helical membrane pass occupies residues 370–390 (VSIYLIQVIFGAVDFPAKIFS). Topologically, residues 391-400 (TTAMIYVGRK) are cytoplasmic. Residues 401-421 (FTQLMSLILGGVVILANSFVP) form a helical membrane-spanning segment. Residues 422-428 (HEMQTVR) lie on the Extracellular side of the membrane. Residues 429-449 (TGMAVFGKGCLAASFSCVFLY) traverse the membrane as a helical segment. Topologically, residues 450 to 462 (TTELYPTVIRQSG) are cytoplasmic. The helical transmembrane segment at 463-483 (LGLCSTMARIGGIVAPLVKIL) threads the bilayer. The Extracellular portion of the chain corresponds to 484-488 (GEYYP). The chain crosses the membrane as a helical span at residues 489 to 509 (FLPLVIYGGAPIISGLCVFFL). Residues 510–558 (PETVNKPLPDTIEEVEKRIKAPKKENEMNEIVSLKKKEGMKENPVNDVL) are Cytoplasmic-facing. Residues 539–550 (EIVSLKKKEGMK) show a composition bias toward basic and acidic residues. A disordered region spans residues 539-558 (EIVSLKKKEGMKENPVNDVL).

Belongs to the major facilitator (TC 2.A.1) superfamily. Organic cation transporter (TC 2.A.1.19) family. In terms of processing, glycosylated. Glycosylation is necessary for proper targeting of the transporter to the plasma membrane.

The protein localises to the cell membrane. The protein resides in the basolateral cell membrane. Its subcellular location is the basal cell membrane. Its function is as follows. Involved in the renal elimination of endogenous and exogenous organic anions. Mediates the sodium-independent uptake of p-aminohippurate (PAH), 2,3-dimercapto-1-propanesulfonic acid (DMPS), cidofovir, adefovir, 9-(2-phosphonylmethoxyethyl) guanine (PMEG), 9-(2-phosphonylmethoxyethyl) diaminopurine (PMEDAP), ochratoxin (OTA), acyclovir (ACV), 3'-azido-3-'deoxythymidine (AZT), cimetidine (CMD), 2,4-dichloro-phenoxyacetate (2,4-D), hippurate (HA), indoleacetate (IA), indoxyl sulfate (IS) and 3-carboxy-4-methyl-5-propyl-2-furanpropionate (CMPF) and edaravone sulfate. PAH uptake is inhibited by p-chloromercuribenzenesulphonate (PCMBS), diethyl pyrocarbonate (DEPC), indomethacin, sulindac, diclofenac, carprofen, okadaic acid, benzothiazolylcysteine (BTC), S-chlorotrifluoroethylcysteine (CTFC), cysteine S-conjugates S-dichlorovinylcysteine (DCVC), furosemide, steviol, phorbol 12-myristate 13-acetate (PMA), calcium ionophore A23187, benzylpenicillin, bumetamide, losartan, probenecid, phenol red, urate, glutarate and alpha-ketoglutarate. In Xenopus laevis (African clawed frog), this protein is Solute carrier family 22 member 6-A (slc22a6-a).